The following is a 229-amino-acid chain: Glycerol-3-phosphate acyltransferase (229 aa).

The next 6 helical transmembrane spans lie at 2–22, 56–76, 93–113, 129–149, 151–171, and 178–198; these read WSLT…GALW, LATV…ASVI, FVVL…YPIF, LFAL…AVLL, SRYV…IVAL, and ADLD…IVVA.

Belongs to the PlsY family. Probably interacts with PlsX.

It localises to the cell inner membrane. The catalysed reaction is an acyl phosphate + sn-glycerol 3-phosphate = a 1-acyl-sn-glycero-3-phosphate + phosphate. Its pathway is lipid metabolism; phospholipid metabolism. Functionally, catalyzes the transfer of an acyl group from acyl-phosphate (acyl-PO(4)) to glycerol-3-phosphate (G3P) to form lysophosphatidic acid (LPA). This enzyme utilizes acyl-phosphate as fatty acyl donor, but not acyl-CoA or acyl-ACP. This chain is Glycerol-3-phosphate acyltransferase, found in Salinibacter ruber (strain DSM 13855 / M31).